The chain runs to 497 residues: tRNA-2-methylthio-N(6)-dimethylallyladenosine synthase (497 aa).

Positions 1-48 (MTGTSNIPTHGKEHKDAPALLPLPAPNTHHTHAAHPGDPSHDRHPSRG) are disordered. Positions 18 to 28 (PALLPLPAPNT) are enriched in low complexity. One can recognise an MTTase N-terminal domain in the interval 48–165 (GKLFIKTHGC…LPDMIRARRE (118 aa)). [4Fe-4S] cluster-binding residues include Cys-57, Cys-94, Cys-128, Cys-202, Cys-206, and Cys-209. A Radical SAM core domain is found at 188–430 (RAEGPSAFVS…QKHINAYAAD (243 aa)). Residues 433-496 (KRMIGTVQTV…TNSLRGRVHT (64 aa)) enclose the TRAM domain.

This sequence belongs to the methylthiotransferase family. MiaB subfamily. As to quaternary structure, monomer. The cofactor is [4Fe-4S] cluster.

The protein resides in the cytoplasm. The catalysed reaction is N(6)-dimethylallyladenosine(37) in tRNA + (sulfur carrier)-SH + AH2 + 2 S-adenosyl-L-methionine = 2-methylsulfanyl-N(6)-dimethylallyladenosine(37) in tRNA + (sulfur carrier)-H + 5'-deoxyadenosine + L-methionine + A + S-adenosyl-L-homocysteine + 2 H(+). Catalyzes the methylthiolation of N6-(dimethylallyl)adenosine (i(6)A), leading to the formation of 2-methylthio-N6-(dimethylallyl)adenosine (ms(2)i(6)A) at position 37 in tRNAs that read codons beginning with uridine. This chain is tRNA-2-methylthio-N(6)-dimethylallyladenosine synthase, found in Xylella fastidiosa (strain M23).